A 968-amino-acid polypeptide reads, in one-letter code: RNA polymerase-associated protein RapA (968 aa).

The Helicase ATP-binding domain occupies 164-334; it reads EVGQRHAPRV…FARLRLLDPN (171 aa). An ATP-binding site is contributed by 177 to 184; the sequence is DEVGLGKT. The DEAH box motif lies at 280-283; sequence DEAH. One can recognise a Helicase C-terminal domain in the interval 490 to 664; that stretch reads RVEWLLNYLV…AAPTEQEGLD (175 aa).

The protein belongs to the SNF2/RAD54 helicase family. RapA subfamily. In terms of assembly, interacts with the RNAP. Has a higher affinity for the core RNAP than for the holoenzyme. Its ATPase activity is stimulated by binding to RNAP.

In terms of biological role, transcription regulator that activates transcription by stimulating RNA polymerase (RNAP) recycling in case of stress conditions such as supercoiled DNA or high salt concentrations. Probably acts by releasing the RNAP, when it is trapped or immobilized on tightly supercoiled DNA. Does not activate transcription on linear DNA. Probably not involved in DNA repair. This is RNA polymerase-associated protein RapA from Serratia proteamaculans (strain 568).